We begin with the raw amino-acid sequence, 330 residues long: Glycerol-3-phosphate dehydrogenase [NAD(P)+] 1 (330 aa).

The NADPH site is built by Trp-15, Arg-35, and Lys-105. Sn-glycerol 3-phosphate contacts are provided by Lys-105, Gly-133, and Thr-135. Position 137 (Ala-137) interacts with NADPH. Residues Lys-188, Asp-241, Ser-251, Arg-252, and Asn-253 each contribute to the sn-glycerol 3-phosphate site. Lys-188 acts as the Proton acceptor in catalysis. Arg-252 lines the NADPH pocket. NADPH is bound by residues Ile-276 and Glu-278.

It belongs to the NAD-dependent glycerol-3-phosphate dehydrogenase family.

The protein localises to the cytoplasm. The catalysed reaction is sn-glycerol 3-phosphate + NAD(+) = dihydroxyacetone phosphate + NADH + H(+). It carries out the reaction sn-glycerol 3-phosphate + NADP(+) = dihydroxyacetone phosphate + NADPH + H(+). It participates in membrane lipid metabolism; glycerophospholipid metabolism. Its function is as follows. Catalyzes the reduction of the glycolytic intermediate dihydroxyacetone phosphate (DHAP) to sn-glycerol 3-phosphate (G3P), the key precursor for phospholipid synthesis. The polypeptide is Glycerol-3-phosphate dehydrogenase [NAD(P)+] 1 (Sphingopyxis alaskensis (strain DSM 13593 / LMG 18877 / RB2256) (Sphingomonas alaskensis)).